The primary structure comprises 103 residues: Co-chaperonin GroES (103 aa).

It belongs to the GroES chaperonin family. Heptamer of 7 subunits arranged in a ring. Interacts with the chaperonin GroEL.

It is found in the cytoplasm. Its function is as follows. Together with the chaperonin GroEL, plays an essential role in assisting protein folding. The GroEL-GroES system forms a nano-cage that allows encapsulation of the non-native substrate proteins and provides a physical environment optimized to promote and accelerate protein folding. GroES binds to the apical surface of the GroEL ring, thereby capping the opening of the GroEL channel. This is Co-chaperonin GroES from Nostoc punctiforme (strain ATCC 29133 / PCC 73102).